Consider the following 502-residue polypeptide: Glycerol kinase (502 aa).

An ADP-binding site is contributed by T13. ATP is bound by residues T13, T14, and S15. T13 lines the sn-glycerol 3-phosphate pocket. R17 is an ADP binding site. The sn-glycerol 3-phosphate site is built by R83, E84, Y136, and D246. R83, E84, Y136, D246, and Q247 together coordinate glycerol. ADP-binding residues include T268 and G311. T268, G311, Q315, and G412 together coordinate ATP. Residues G412 and N416 each contribute to the ADP site.

It belongs to the FGGY kinase family.

The enzyme catalyses glycerol + ATP = sn-glycerol 3-phosphate + ADP + H(+). Its pathway is polyol metabolism; glycerol degradation via glycerol kinase pathway; sn-glycerol 3-phosphate from glycerol: step 1/1. With respect to regulation, inhibited by fructose 1,6-bisphosphate (FBP). Functionally, key enzyme in the regulation of glycerol uptake and metabolism. Catalyzes the phosphorylation of glycerol to yield sn-glycerol 3-phosphate. This Francisella tularensis subsp. tularensis (strain FSC 198) protein is Glycerol kinase.